Reading from the N-terminus, the 269-residue chain is Hydroxyethylthiazole kinase (269 aa).

M45 provides a ligand contact to substrate. Positions 121 and 167 each coordinate ATP. G194 contacts substrate.

Belongs to the Thz kinase family. Mg(2+) serves as cofactor.

It carries out the reaction 5-(2-hydroxyethyl)-4-methylthiazole + ATP = 4-methyl-5-(2-phosphooxyethyl)-thiazole + ADP + H(+). The protein operates within cofactor biosynthesis; thiamine diphosphate biosynthesis; 4-methyl-5-(2-phosphoethyl)-thiazole from 5-(2-hydroxyethyl)-4-methylthiazole: step 1/1. Its function is as follows. Catalyzes the phosphorylation of the hydroxyl group of 4-methyl-5-beta-hydroxyethylthiazole (THZ). The chain is Hydroxyethylthiazole kinase from Bacillus licheniformis (strain ATCC 14580 / DSM 13 / JCM 2505 / CCUG 7422 / NBRC 12200 / NCIMB 9375 / NCTC 10341 / NRRL NRS-1264 / Gibson 46).